A 168-amino-acid chain; its full sequence is Competence protein B (168 aa).

In terms of biological role, involved in transformation (genetic competence for DNA uptake). In Haemophilus influenzae (strain ATCC 51907 / DSM 11121 / KW20 / Rd), this protein is Competence protein B (comB).